A 224-amino-acid polypeptide reads, in one-letter code: Large ribosomal subunit protein bL25 (224 aa).

Belongs to the bacterial ribosomal protein bL25 family. CTC subfamily. Part of the 50S ribosomal subunit; part of the 5S rRNA/L5/L18/L25 subcomplex. Contacts the 5S rRNA. Binds to the 5S rRNA independently of L5 and L18.

Its function is as follows. This is one of the proteins that binds to the 5S RNA in the ribosome where it forms part of the central protuberance. In Psychrobacter arcticus (strain DSM 17307 / VKM B-2377 / 273-4), this protein is Large ribosomal subunit protein bL25.